The chain runs to 102 residues: Small ribosomal subunit protein uS10 (102 aa).

This sequence belongs to the universal ribosomal protein uS10 family. Part of the 30S ribosomal subunit.

Involved in the binding of tRNA to the ribosomes. The protein is Small ribosomal subunit protein uS10 of Streptococcus thermophilus (strain ATCC BAA-250 / LMG 18311).